Reading from the N-terminus, the 285-residue chain is MAHQAHPFRSVLYIPGSKERALEKAQGLAADAIIFDLEDAVAHDEKIHARRLLKTTLETADYGHRFRIVRVNGMDTEWGRADLEAFAEAKADAILIPKVSRAADLEAVAALVPDLPLWAMMETAQGMLNAAEIAAHPRLSGMVMGTNDLAKELGSRYRPDRLAMQAGLGLCLLAARAHGLTIVDGVYNAFKDEEGLRAECEQGRDMGFDGKTLIHPAQLEIANAVFSPSPAEIELANRQIAAFEEAERHGQGVAVVDGKIVENLHIVTARQTLAKAEAIAAFRAS.

Positions 70 and 122 each coordinate substrate. Mg(2+) is bound by residues glutamate 122 and aspartate 148.

It belongs to the HpcH/HpaI aldolase family. As to quaternary structure, homodimer or homotrimer. Mg(2+) serves as cofactor.

The enzyme catalyses (S)-malyl-CoA + H2O = (S)-malate + CoA + H(+). Reversibly inhibited by EDTA. Stimulated by the divalent cations Mg(2+) and Mn(2+). Catalyzes the hydrolysis of (3S)-malyl-CoA to (3S)-malate and free CoA. Inactive towards beta-methylmalyl-CoA and other CoA esters. The sequence is that of (3S)-malyl-CoA thioesterase from Cereibacter sphaeroides (strain ATCC 17023 / DSM 158 / JCM 6121 / CCUG 31486 / LMG 2827 / NBRC 12203 / NCIMB 8253 / ATH 2.4.1.) (Rhodobacter sphaeroides).